A 232-amino-acid polypeptide reads, in one-letter code: 2,3,4,5-tetrahydropyridine-2,6-dicarboxylate N-acetyltransferase (232 aa).

The protein belongs to the transferase hexapeptide repeat family. DapH subfamily.

It catalyses the reaction (S)-2,3,4,5-tetrahydrodipicolinate + acetyl-CoA + H2O = L-2-acetamido-6-oxoheptanedioate + CoA. It functions in the pathway amino-acid biosynthesis; L-lysine biosynthesis via DAP pathway; LL-2,6-diaminopimelate from (S)-tetrahydrodipicolinate (acetylase route): step 1/3. In terms of biological role, catalyzes the transfer of an acetyl group from acetyl-CoA to tetrahydrodipicolinate. The sequence is that of 2,3,4,5-tetrahydropyridine-2,6-dicarboxylate N-acetyltransferase from Streptococcus sanguinis (strain SK36).